The chain runs to 113 residues: U11-theraphotoxin-Hhn1u (113 aa).

A signal peptide spans 1–21; sequence MNTVRVTFLLVFVLAVSLGQA. A propeptide spanning residues 22 to 74 is cleaved from the precursor; it reads DKDENRMEMQEKTEQGKSYLDFAENLLLQKLEELEAKLLEEDSEESRNSRQKR. 3 cysteine pairs are disulfide-bonded: cysteine 75–cysteine 90, cysteine 82–cysteine 95, and cysteine 89–cysteine 110.

This sequence belongs to the neurotoxin 14 (magi-1) family. 01 (HNTX-16) subfamily. As to expression, expressed by the venom gland.

It is found in the secreted. Probable ion channel inhibitor. The polypeptide is U11-theraphotoxin-Hhn1u (Cyriopagopus hainanus (Chinese bird spider)).